A 74-amino-acid polypeptide reads, in one-letter code: Omega-conotoxin-like PuIIA (74 aa).

A signal peptide spans 1 to 22; that stretch reads MKLTCVVIVAVLFLTACQLITA. Residues 23–46 constitute a propeptide that is removed on maturation; the sequence is ETYSRGEQKHRALSSTDKNSKLTR. Disulfide bonds link C48–C62, C55–C66, and C61–C73.

This sequence belongs to the conotoxin O1 superfamily. Expressed by the venom duct.

It localises to the secreted. Omega-conotoxins act at presynaptic membranes, they bind and block voltage-gated calcium channels (Cav). The chain is Omega-conotoxin-like PuIIA from Conus pulicarius (Flea-bitten cone).